The chain runs to 570 residues: Hydroxylamine reductase (570 aa).

Residues cysteine 5, cysteine 8, cysteine 17, and cysteine 23 each coordinate [4Fe-4S] cluster. Positions 266, 290, 334, 425, 453, 478, 513, and 515 each coordinate hybrid [4Fe-2O-2S] cluster. Residue cysteine 425 is modified to Cysteine persulfide.

It belongs to the HCP family. [4Fe-4S] cluster is required as a cofactor. The cofactor is hybrid [4Fe-2O-2S] cluster.

Its subcellular location is the cytoplasm. It carries out the reaction A + NH4(+) + H2O = hydroxylamine + AH2 + H(+). Functionally, catalyzes the reduction of hydroxylamine to form NH(3) and H(2)O. In Clostridium botulinum (strain 657 / Type Ba4), this protein is Hydroxylamine reductase.